The following is a 252-amino-acid chain: 2-succinyl-6-hydroxy-2,4-cyclohexadiene-1-carboxylate synthase (252 aa).

The protein belongs to the AB hydrolase superfamily. MenH family. As to quaternary structure, monomer.

It catalyses the reaction 5-enolpyruvoyl-6-hydroxy-2-succinyl-cyclohex-3-ene-1-carboxylate = (1R,6R)-6-hydroxy-2-succinyl-cyclohexa-2,4-diene-1-carboxylate + pyruvate. Its pathway is quinol/quinone metabolism; 1,4-dihydroxy-2-naphthoate biosynthesis; 1,4-dihydroxy-2-naphthoate from chorismate: step 3/7. The protein operates within quinol/quinone metabolism; menaquinone biosynthesis. Catalyzes a proton abstraction reaction that results in 2,5-elimination of pyruvate from 2-succinyl-5-enolpyruvyl-6-hydroxy-3-cyclohexene-1-carboxylate (SEPHCHC) and the formation of 2-succinyl-6-hydroxy-2,4-cyclohexadiene-1-carboxylate (SHCHC). The chain is 2-succinyl-6-hydroxy-2,4-cyclohexadiene-1-carboxylate synthase from Salmonella typhimurium (strain LT2 / SGSC1412 / ATCC 700720).